We begin with the raw amino-acid sequence, 363 residues long: Putative agmatine deiminase 1 (363 aa).

Residue Cys-356 is the Amidino-cysteine intermediate of the active site.

It belongs to the agmatine deiminase family.

The enzyme catalyses agmatine + H2O = N-carbamoylputrescine + NH4(+). The polypeptide is Putative agmatine deiminase 1 (Listeria monocytogenes serovar 1/2a (strain ATCC BAA-679 / EGD-e)).